The following is a 364-amino-acid chain: Dual-specificity RNA methyltransferase RlmN (364 aa).

Glu-91 serves as the catalytic Proton acceptor. A Radical SAM core domain is found at 97 to 333 (EDDRGTLCVS…VTVRKTRGDD (237 aa)). A disulfide bridge connects residues Cys-104 and Cys-338. [4Fe-4S] cluster is bound by residues Cys-111, Cys-115, and Cys-118. S-adenosyl-L-methionine is bound by residues 164-165 (GE), Ser-196, 218-220 (SLH), and Asn-295. Cys-338 serves as the catalytic S-methylcysteine intermediate.

The protein belongs to the radical SAM superfamily. RlmN family. Requires [4Fe-4S] cluster as cofactor.

It is found in the cytoplasm. It carries out the reaction adenosine(2503) in 23S rRNA + 2 reduced [2Fe-2S]-[ferredoxin] + 2 S-adenosyl-L-methionine = 2-methyladenosine(2503) in 23S rRNA + 5'-deoxyadenosine + L-methionine + 2 oxidized [2Fe-2S]-[ferredoxin] + S-adenosyl-L-homocysteine. The enzyme catalyses adenosine(37) in tRNA + 2 reduced [2Fe-2S]-[ferredoxin] + 2 S-adenosyl-L-methionine = 2-methyladenosine(37) in tRNA + 5'-deoxyadenosine + L-methionine + 2 oxidized [2Fe-2S]-[ferredoxin] + S-adenosyl-L-homocysteine. Functionally, specifically methylates position 2 of adenine 2503 in 23S rRNA and position 2 of adenine 37 in tRNAs. m2A2503 modification seems to play a crucial role in the proofreading step occurring at the peptidyl transferase center and thus would serve to optimize ribosomal fidelity. The sequence is that of Dual-specificity RNA methyltransferase RlmN from Chromobacterium violaceum (strain ATCC 12472 / DSM 30191 / JCM 1249 / CCUG 213 / NBRC 12614 / NCIMB 9131 / NCTC 9757 / MK).